Here is a 299-residue protein sequence, read N- to C-terminus: Regucalcin (299 aa).

A divalent metal cation is bound at residue Glu-18. Residues Arg-101, Asn-103, and Glu-121 each coordinate substrate. Residue Lys-144 is modified to N6-succinyllysine. A divalent metal cation is bound by residues Asn-154 and Asp-204. Asp-204 (proton donor/acceptor) is an active-site residue. Lys-244 and Lys-253 each carry N6-succinyllysine.

Belongs to the SMP-30/CGR1 family. As to quaternary structure, monomer. Requires Zn(2+) as cofactor. It depends on Mn(2+) as a cofactor. Ca(2+) is required as a cofactor. The cofactor is Mg(2+).

It is found in the cytoplasm. The catalysed reaction is D-glucono-1,5-lactone + H2O = D-gluconate + H(+). The protein operates within cofactor biosynthesis; L-ascorbate biosynthesis via UDP-alpha-D-glucuronate pathway; L-ascorbate from UDP-alpha-D-glucuronate: step 3/4. Its function is as follows. Gluconolactonase with low activity towards other sugar lactones, including gulonolactone and galactonolactone. Catalyzes a key step in ascorbic acid (vitamin C) biosynthesis. Can also hydrolyze diisopropyl phosphorofluoridate and phenylacetate (in vitro). Calcium-binding protein. Modulates Ca(2+) signaling, and Ca(2+)-dependent cellular processes and enzyme activities. In Oryctolagus cuniculus (Rabbit), this protein is Regucalcin (RGN).